The following is a 450-amino-acid chain: Sensor histidine kinase EnvZ (450 aa).

Residues 1–15 (MRRMRFSPRSSFART) lie on the Cytoplasmic side of the membrane. Residues 16 to 35 (LLLIVTLLFVSLVTTYLVVL) traverse the membrane as a helical segment. The Periplasmic segment spans residues 36-158 (NFAILPSLQQ…LTEIHQGDFS (123 aa)). Residues 159–179 (PLFRYTLAIMLLAIGGAWLFI) form a helical membrane-spanning segment. Positions 180–232 (RIQNRPLVDLEHAALQVGKGIIPPPLREYGASEVRSVTRAFNHMAAGVKQLAD) constitute an HAMP domain. Over 180-450 (RIQNRPLVDL…ARVQGTTKEA (271 aa)) the chain is Cytoplasmic. A cytoplasmic dimerization domain (CDD), when dimerized forms osmosensitive core region spans residues 223-289 (MAAGVKQLAD…IIEQFIDYLR (67 aa)). The Histidine kinase domain maps to 240–440 (GVSHDLRTPL…SIRAWLPVPV (201 aa)). Residues His243, 347-351 (NAARY), Asp373, 392-393 (RG), and 402-406 (TGLGL) each bind ATP. His243 is subject to Phosphohistidine; by autocatalysis.

In terms of assembly, homodimer. Autophosphorylated.

The protein localises to the cell inner membrane. The enzyme catalyses ATP + protein L-histidine = ADP + protein N-phospho-L-histidine.. Member of the two-component regulatory system EnvZ/OmpR involved in regulating expression of the outer membrane porins OmpC and OmpF as well as other genes. Unlike E.coli or S.typhimurium both porins are expressed constitutively. Involved in regulation of the biosynthesis of Vi polysaccharide, a capsular antigen thought to be involved in the virulence of S.typhi. Vi antigen is synthesized at low NaCl concentrations (under 0.4 M). EnvZ functions as a membrane-associated protein kinase that phosphorylates OmpR in response to environmental signals. This chain is Sensor histidine kinase EnvZ (envZ), found in Salmonella typhi.